A 192-amino-acid chain; its full sequence is Interferon epsilon (192 aa).

The N-terminal stretch at 1–21 (MVHRQLPETVLLLLVSSTIFS) is a signal peptide. Cys-52 and Cys-162 are disulfide-bonded.

This sequence belongs to the alpha/beta interferon family. In terms of tissue distribution, expressed at very high levels in uterus and, at much lower levels, in ovary and cervix. Very low levels, if any, in other organs. In the endometrium, expressed in the luminal and glandular epithelial cells (at protein level).

The protein localises to the secreted. In terms of biological role, type I interferon required for maintaining basal levels of IFN-regulated genes, including 2'-5'-oligoadenylate synthetase, IRF7 and ISG15, in the female reproductive tract. Directly mediates protection against viral, including HSV-2, and bacterial, including Chlamydia muridarum, genital infections. The sequence is that of Interferon epsilon (Ifne) from Mus musculus (Mouse).